The primary structure comprises 121 residues: Protein SNORC (121 aa).

Positions 1–24 are cleaved as a signal peptide; it reads MASCLALRVALLLISGVLAPAVLT. The Extracellular portion of the chain corresponds to 25 to 92; the sequence is AEGPQEPDPT…QDGGSLGPGA (68 aa). The tract at residues 26-84 is disordered; the sequence is EGPQEPDPTLWNEPIELPSGEGPLESTSHNQEFAVSGPPFPTSAPAPEDSTPPARVDQD. A helical transmembrane segment spans residues 93-113; the sequence is IAAIVIAALLATCVVLALVVV. At 114 to 121 the chain is on the cytoplasmic side; it reads ALRKFSAS.

As to quaternary structure, interacts (via the extracellular domain) with FGF2. In terms of tissue distribution, expressed only in cartilage, including nasal, knee epiphyseal and rib tissues. In proliferation and hypertrophic chondrocytes, detected intracellulary and in the pericellular extracellular matrix. In primary spongiosa, detected only in the extracellular matrix.

Its subcellular location is the membrane. The protein resides in the cytoplasm. The protein localises to the secreted. It localises to the extracellular space. It is found in the extracellular matrix. In terms of biological role, plays a role in the regulation of chondrocyte maturation and postnatal endochondral ossification. May inhibit cell growth stimulation induced by FGF2. This Mus musculus (Mouse) protein is Protein SNORC.